The primary structure comprises 315 residues: Cobalamin biosynthesis protein CobD (315 aa).

The next 5 membrane-spanning stretches (helical) occupy residues 54 to 74 (GLLFVLTVGMTGVVSWFILFL), 78 to 98 (IAYWLYVAVFVYLGYTTLAMT), 152 to 172 (ADGVIAPLFYLFIGGPVLALM), 203 to 223 (IANFIPARLAWFFLVIASFIL), and 295 to 315 (LLYTASTIAFIIFASIYLLLF).

This sequence belongs to the CobD/CbiB family.

It is found in the cell membrane. The protein operates within cofactor biosynthesis; adenosylcobalamin biosynthesis. In terms of biological role, converts cobyric acid to cobinamide by the addition of aminopropanol on the F carboxylic group. The sequence is that of Cobalamin biosynthesis protein CobD from Listeria monocytogenes serotype 4b (strain F2365).